Here is a 504-residue protein sequence, read N- to C-terminus: Sodium-coupled neutral amino acid symporter 2 (504 aa).

The disordered stretch occupies residues Met1–Thr28. The Cytoplasmic segment spans residues Met1 to Ser79. Positions Met1–Met99 are regulates protein turnover upon amino acid deprivation. Residues Ser19–Thr28 are compositionally biased toward low complexity. The helical transmembrane segment at Val80–Met99 threads the bilayer. Asn85 serves as a coordination point for Na(+). At Ala100–Ala105 the chain is on the extracellular side. Residues Met106–Leu126 form a helical membrane-spanning segment. Residues Lys127–Asn161 are Cytoplasmic-facing. Residues Phe162 to Ile180 form a helical membrane-spanning segment. The Extracellular portion of the chain corresponds to Arg181–Asn189. Residues Ala190–Leu210 form a helical membrane-spanning segment. The Cytoplasmic portion of the chain corresponds to Ser211 to Tyr218. A helical membrane pass occupies residues Leu219 to Tyr239. The Extracellular portion of the chain corresponds to Lys240–Thr285. Cys246 and Cys274 are disulfide-bonded. Asn254 and Asn258 each carry an N-linked (GlcNAc...) asparagine glycan. Residues Val286–Tyr306 form a helical membrane-spanning segment. Residues Glu307–Asn322 are Cytoplasmic-facing. Residues Val323–Phe343 form a helical membrane-spanning segment. Residues Asn344 to Val364 lie on the Extracellular side of the membrane. A helical transmembrane segment spans residues Leu365–Phe385. Thr379 is a Na(+) binding site. Residues Pro386–His406 lie on the Cytoplasmic side of the membrane. A helical transmembrane segment spans residues Ile407–Ile427. The Extracellular portion of the chain corresponds to Arg428–Asp429. Residues Ile430–Phe450 form a helical membrane-spanning segment. Residues Tyr451 to Lys465 lie on the Cytoplasmic side of the membrane. Residues Ile466–Met488 form a helical membrane-spanning segment. Residues Asp489–His504 lie on the Extracellular side of the membrane.

This sequence belongs to the amino acid/polyamine transporter 2 family.

Its subcellular location is the cell membrane. It catalyses the reaction L-alanine(in) + Na(+)(in) = L-alanine(out) + Na(+)(out). It carries out the reaction glycine(in) + Na(+)(in) = glycine(out) + Na(+)(out). The catalysed reaction is L-serine(in) + Na(+)(in) = L-serine(out) + Na(+)(out). The enzyme catalyses L-proline(in) + Na(+)(in) = L-proline(out) + Na(+)(out). It catalyses the reaction L-methionine(in) + Na(+)(in) = L-methionine(out) + Na(+)(out). It carries out the reaction L-histidine(in) + Na(+)(in) = L-histidine(out) + Na(+)(out). The catalysed reaction is L-asparagine(in) + Na(+)(in) = L-asparagine(out) + Na(+)(out). The enzyme catalyses L-glutamine(in) + Na(+)(in) = L-glutamine(out) + Na(+)(out). It catalyses the reaction L-threonine(in) + Na(+)(in) = L-threonine(out) + Na(+)(out). It carries out the reaction L-leucine(in) + Na(+)(in) = L-leucine(out) + Na(+)(out). The catalysed reaction is L-phenylalanine(in) + Na(+)(in) = L-phenylalanine(out) + Na(+)(out). Inhibited by N-methyl-D-glucamine. Inhibited by choline. Allosteric regulation of sodium ions binding by pH. Its function is as follows. Symporter that cotransports neutral amino acids and sodium ions from the extracellular to the intracellular side of the cell membrane. The transport is pH-sensitive, Li(+)-intolerant, electrogenic, driven by the Na(+) electrochemical gradient and cotransports of neutral amino acids and sodium ions with a stoichiometry of 1:1. In Danio rerio (Zebrafish), this protein is Sodium-coupled neutral amino acid symporter 2.